We begin with the raw amino-acid sequence, 866 residues long: E3 ubiquitin-protein ligase RNF216 (866 aa).

3 disordered regions span residues 46–117 (LVTP…NPRS), 131–161 (YTES…SAAL), and 211–240 (EFPG…HPLG). The span at 55–76 (EEEDLDDDVILTEDDSEDDYGE) shows a compositional bias: acidic residues. Residues L80, T89, and K100 each participate in a glycyl lysine isopeptide (Lys-Gly) (interchain with G-Cter in SUMO2) cross-link. Polar residues predominate over residues 137-156 (LETQNQSSEDSETELLSNLG). Residues K351 and K354 each participate in a glycyl lysine isopeptide (Lys-Gly) (interchain with G-Cter in SUMO2) cross-link. The residue at position 419 (S419) is a Phosphoserine. Glycyl lysine isopeptide (Lys-Gly) (interchain with G-Cter in SUMO2) cross-links involve residues K425, K430, K448, K459, and K485. A coiled-coil region spans residues 475–491 (VQQEQEFYEQKIKEMAE). Positions 511 to 728 (QLIECRCCYG…SPGAPCQECS (218 aa)) are TRIAD supradomain. Zn(2+)-binding residues include C515, C518, C537, C540, C605, and C608. Residues 515-564 (CRCCYGEFPFEELTQCADAHLFCKECLIRYAQEAVFGSGKLELSCMEGSC) form an RING-type 1 zinc finger. An IBR-type zinc finger spans residues 583–648 (YKYYERKAEE…LWKEHNGLTC (66 aa)). K619 participates in a covalent cross-link: Glycyl lysine isopeptide (Lys-Gly) (interchain with G-Cter in SUMO2). Zn(2+)-binding residues include C623, C628, C633, C636, H643, and C648. Glycyl lysine isopeptide (Lys-Gly) (interchain with G-Cter in SUMO2) cross-links involve residues K658 and K666. C675 and C678 together coordinate Zn(2+). Residues 675-703 (CHKCGTGLIKSEGCNRMSCRCGAQMCYLC) form an RING-type 2; atypical zinc finger. C688 is an active-site residue. Zn(2+) is bound by residues C693, C695, C700, C703, and H716. Phosphoserine; by MAPK1 is present on S719. Zn(2+) is bound at residue C724. Residues 737 to 763 (TEDDEKLIEEIQKEAEEEQKRKNGENT) adopt a coiled-coil conformation. Glycyl lysine isopeptide (Lys-Gly) (interchain with G-Cter in SUMO2) cross-links involve residues K765 and K773.

In terms of assembly, interacts with UBE2L3 and to some extent with UBE2L6. Interacts with TRAF3, TLR3, TLR4, TLR5 and TLR9. Isoform 3/ZIN binds RIPK1. (Microbial infection) Isoform 3/ZIN binds RIPK1 and HIV Vif. Auto-ubiquitinated. In terms of processing, phosphorylation at Ser-719 enhances acceptor ubiquitin binding and chain-type specificity towards 'Lys-63' di-ubiquitin but not di-ubiquitin with other linkage types. As to expression, ubiquitous, with the highest levels of expression in testis and peripheral blood leukocytes.

Its subcellular location is the cytoplasm. It is found in the cytoplasmic vesicle. The protein resides in the clathrin-coated vesicle. The enzyme catalyses S-ubiquitinyl-[E2 ubiquitin-conjugating enzyme]-L-cysteine + [acceptor protein]-L-lysine = [E2 ubiquitin-conjugating enzyme]-L-cysteine + N(6)-ubiquitinyl-[acceptor protein]-L-lysine.. It functions in the pathway protein modification; protein ubiquitination. Its activity is regulated as follows. Allosterically activated by 'Lys-63'-linked di-ubiquitin. In terms of biological role, E3 ubiquitin ligase which accepts ubiquitin from specific E2 ubiquitin-conjugating enzymes, and then transfers it to substrates promoting their ubiquitination. Plays a role in the regulation of antiviral responses by promoting the degradation of TRAF3, TLR4 and TLR9. In turn, down-regulates NF-kappa-B and IRF3 activation as well as beta interferon production. Also participates in the regulation of autophagy by ubiquitinating BECN1 leading to its degradation and autophagy inhibition. Plays a role in ARC-dependent synaptic plasticity by mediating ARC ubiquitination resulting in its rapid proteasomal degradation. Plays aso an essential role in spermatogenesis and male fertility. Mechanistically, regulates meiosis by promoting the degradation of PRKACB through the ubiquitin-mediated lysosome pathway. Modulates the gonadotropin-releasing hormone signal pathway by affecting the stability of STAU2 that is required for the microtubule-dependent transport of neuronal RNA from the cell body to the dendrite. Functionally, inhibits TNF and IL-1 mediated activation of NF-kappa-B. Promotes TNF and RIP mediated apoptosis. The chain is E3 ubiquitin-protein ligase RNF216 (RNF216) from Homo sapiens (Human).